The chain runs to 400 residues: CinA-like protein (400 aa).

The protein belongs to the CinA family.

The polypeptide is CinA-like protein (Escherichia coli (strain SE11)).